A 341-amino-acid polypeptide reads, in one-letter code: Protein phosphatase methylesterase 1 (341 aa).

Residues 1–24 (MAFRKEELSQTLYENESEQSSETK) form a disordered region. A compositionally biased stretch (polar residues) spans 9–20 (SQTLYENESEQS). Active-site residues include S153, D178, and H304.

The protein belongs to the AB hydrolase superfamily.

The enzyme catalyses [phosphatase 2A protein]-C-terminal L-leucine methyl ester + H2O = [phosphatase 2A protein]-C-terminal L-leucine + methanol + H(+). Demethylates proteins that have been reversibly carboxymethylated. Demethylates the phosphatase PP2A catalytic subunit. The sequence is that of Protein phosphatase methylesterase 1 (ppe1) from Schizosaccharomyces pombe (strain 972 / ATCC 24843) (Fission yeast).